We begin with the raw amino-acid sequence, 239 residues long: Tetrahydromethanopterin S-methyltransferase subunit A (239 aa).

The Cytoplasmic portion of the chain corresponds to 1-215; the sequence is MANKKSPAAT…EAAMIAKFNS (215 aa). His85 contributes to the 5-hydroxybenzimidazolylcob(I)amide binding site. Residues 216-238 form a helical membrane-spanning segment; it reads GYYNGKIQGIAIGLFLSILVFSL. Position 239 (Leu239) is a topological domain, extracellular.

This sequence belongs to the MtrA family. The complex is composed of 8 subunits; MtrA, MtrB, MtrC, MtrD, MtrE, MtrF, MtrG and MtrH. 5-hydroxybenzimidazolylcob(I)amide serves as cofactor.

It localises to the cell membrane. The enzyme catalyses 5-methyl-5,6,7,8-tetrahydromethanopterin + coenzyme M + 2 Na(+)(in) = 5,6,7,8-tetrahydromethanopterin + methyl-coenzyme M + 2 Na(+)(out). Its pathway is one-carbon metabolism; methanogenesis from CO(2); methyl-coenzyme M from 5,10-methylene-5,6,7,8-tetrahydromethanopterin: step 2/2. Its function is as follows. Part of a complex that catalyzes the formation of methyl-coenzyme M and tetrahydromethanopterin from coenzyme M and methyl-tetrahydromethanopterin. This is an energy-conserving, sodium-ion translocating step. The protein is Tetrahydromethanopterin S-methyltransferase subunit A of Methanococcus maripaludis (strain C7 / ATCC BAA-1331).